The primary structure comprises 110 residues: Large ribosomal subunit protein uL22 (110 aa).

The protein belongs to the universal ribosomal protein uL22 family. In terms of assembly, part of the 50S ribosomal subunit.

In terms of biological role, this protein binds specifically to 23S rRNA; its binding is stimulated by other ribosomal proteins, e.g. L4, L17, and L20. It is important during the early stages of 50S assembly. It makes multiple contacts with different domains of the 23S rRNA in the assembled 50S subunit and ribosome. Its function is as follows. The globular domain of the protein is located near the polypeptide exit tunnel on the outside of the subunit, while an extended beta-hairpin is found that lines the wall of the exit tunnel in the center of the 70S ribosome. The polypeptide is Large ribosomal subunit protein uL22 (Enterobacter sp. (strain 638)).